Here is a 166-residue protein sequence, read N- to C-terminus: ATP synthase subunit b 1 (166 aa).

The helical transmembrane segment at Phe7 to Thr29 threads the bilayer.

This sequence belongs to the ATPase B chain family. In terms of assembly, F-type ATPases have 2 components, F(1) - the catalytic core - and F(0) - the membrane proton channel. F(1) has five subunits: alpha(3), beta(3), gamma(1), delta(1), epsilon(1). F(0) has three main subunits: a(1), b(2) and c(10-14). The alpha and beta chains form an alternating ring which encloses part of the gamma chain. F(1) is attached to F(0) by a central stalk formed by the gamma and epsilon chains, while a peripheral stalk is formed by the delta and b chains.

Its subcellular location is the cell inner membrane. Functionally, f(1)F(0) ATP synthase produces ATP from ADP in the presence of a proton or sodium gradient. F-type ATPases consist of two structural domains, F(1) containing the extramembraneous catalytic core and F(0) containing the membrane proton channel, linked together by a central stalk and a peripheral stalk. During catalysis, ATP synthesis in the catalytic domain of F(1) is coupled via a rotary mechanism of the central stalk subunits to proton translocation. Component of the F(0) channel, it forms part of the peripheral stalk, linking F(1) to F(0). This chain is ATP synthase subunit b 1, found in Gluconobacter oxydans (strain 621H) (Gluconobacter suboxydans).